The primary structure comprises 178 residues: Enhancer of split m5 protein (178 aa).

One can recognise a bHLH domain in the interval 18–73 (YLKVKKPLLERQRRARMNKCLDTLKTLVAEFQGDDAILRMDKAEMLEAALVFMRKQ). The Orange domain occupies 89 to 122 (FKNGYMNAVSEISRVMACTPAMSVDVGKTVMTHL). The segment covering 135–165 (VQTSVTTSTPRPLSPASSGYHSDNEDSQSAA) has biased composition (polar residues). The disordered stretch occupies residues 135–178 (VQTSVTTSTPRPLSPASSGYHSDNEDSQSAASPKPVEETMWRPW). A compositionally biased stretch (basic and acidic residues) spans 169–178 (PVEETMWRPW). Positions 175-178 (WRPW) match the WRPW motif motif.

In terms of assembly, transcription repression requires formation of a complex with a corepressor protein (Groucho). Forms homodimers.

It is found in the nucleus. In terms of biological role, participates in the control of cell fate choice by uncommitted neuroectodermal cells in the embryo. Transcriptional repressor. Binds DNA on N-box motifs: 5'-CACNAG-3'. The chain is Enhancer of split m5 protein from Drosophila melanogaster (Fruit fly).